The following is a 334-amino-acid chain: Ferredoxin--NADP reductase (334 aa).

The FAD site is built by D33, Q41, Y46, A86, F120, D286, and T327.

Belongs to the ferredoxin--NADP reductase type 2 family. In terms of assembly, homodimer. The cofactor is FAD.

The enzyme catalyses 2 reduced [2Fe-2S]-[ferredoxin] + NADP(+) + H(+) = 2 oxidized [2Fe-2S]-[ferredoxin] + NADPH. In Rickettsia prowazekii (strain Madrid E), this protein is Ferredoxin--NADP reductase.